We begin with the raw amino-acid sequence, 192 residues long: NADH-quinone oxidoreductase subunit C (192 aa).

Residues 170–192 (LGGIPVEYKGATVPPPDERRQYA) are disordered.

Belongs to the complex I 30 kDa subunit family. NDH-1 is composed of 14 different subunits. Subunits NuoB, C, D, E, F, and G constitute the peripheral sector of the complex.

It is found in the cell membrane. The catalysed reaction is a quinone + NADH + 5 H(+)(in) = a quinol + NAD(+) + 4 H(+)(out). In terms of biological role, NDH-1 shuttles electrons from NADH, via FMN and iron-sulfur (Fe-S) centers, to quinones in the respiratory chain. The immediate electron acceptor for the enzyme in this species is believed to be a menaquinone. Couples the redox reaction to proton translocation (for every two electrons transferred, four hydrogen ions are translocated across the cytoplasmic membrane), and thus conserves the redox energy in a proton gradient. This Acidothermus cellulolyticus (strain ATCC 43068 / DSM 8971 / 11B) protein is NADH-quinone oxidoreductase subunit C.